The primary structure comprises 337 residues: tRNA N6-adenosine threonylcarbamoyltransferase (337 aa).

Residues H111 and H115 each contribute to the Fe cation site. Residues 134-138 (LVSGG), D167, G180, and N272 each bind substrate. Fe cation is bound at residue D300.

The protein belongs to the KAE1 / TsaD family. Requires Fe(2+) as cofactor.

Its subcellular location is the cytoplasm. The enzyme catalyses L-threonylcarbamoyladenylate + adenosine(37) in tRNA = N(6)-L-threonylcarbamoyladenosine(37) in tRNA + AMP + H(+). In terms of biological role, required for the formation of a threonylcarbamoyl group on adenosine at position 37 (t(6)A37) in tRNAs that read codons beginning with adenine. Is involved in the transfer of the threonylcarbamoyl moiety of threonylcarbamoyl-AMP (TC-AMP) to the N6 group of A37, together with TsaE and TsaB. TsaD likely plays a direct catalytic role in this reaction. This is tRNA N6-adenosine threonylcarbamoyltransferase from Nitrosomonas europaea (strain ATCC 19718 / CIP 103999 / KCTC 2705 / NBRC 14298).